The sequence spans 247 residues: TLC domain-containing protein 1 (247 aa).

The N-terminal stretch at 1 to 27 (MPLLLHPAWPLLLGATLTFRALRRVLC) is a signal peptide. Over 28 to 46 (RLPLPAHVQTDPLRTWRWH) the chain is Extracellular. The TLC domain occupies 40-234 (LRTWRWHNLL…LLRSDFCPER (195 aa)). Residues 47-67 (NLLVSFTHSIVSGIWALLCIW) form a helical membrane-spanning segment. The Cytoplasmic portion of the chain corresponds to 68 to 83 (QTPEMLVEIETAWSVC). A helical transmembrane segment spans residues 84-104 (GYLLVCFSAGYFIHDTVDIVV). Residues 105 to 123 (SRQTRASWEYLVHHVMAMG) are Extracellular-facing. The helical intramembrane region spans 124–144 (AFFSGIFWKRFVGGGVLTLLV). The Extracellular portion of the chain corresponds to 145–173 (EVSNIFLTLRMMMKINNAQDILLYKVNKY). A helical membrane pass occupies residues 174–194 (VNLVMYFLFRLAPQAYLTKFF). Residues 195–201 (LQYAGQR) are Cytoplasmic-facing. A helical membrane pass occupies residues 202–222 (TLGTFLLSILLMLDVMILIYF). Residues 223 to 247 (SRLLRSDFCPERAPSRQQKDKFLTE) are Extracellular-facing.

Its subcellular location is the cell membrane. Functionally, regulates the composition and fluidity of the plasma membrane. Inhibits the incorporation of membrane-fluidizing phospholipids containing omega-3 long-chain polyunsaturated fatty acids (LCPUFA) and thereby promotes membrane rigidity. Does not appear to have any effect on LCPUFA synthesis. The protein is TLC domain-containing protein 1 (Tlcd1) of Rattus norvegicus (Rat).